Reading from the N-terminus, the 480-residue chain is tRNA-2-methylthio-N(6)-dimethylallyladenosine synthase (480 aa).

Residues 43–161 enclose the MTTase N-terminal domain; it reads KLYCLNTFGC…FPELLYSAMD (119 aa). The [4Fe-4S] cluster site is built by Cys52, Cys88, Cys122, Cys198, Cys202, and Cys205. Residues 184–414 form the Radical SAM core domain; sequence RKDGVKAWVT…LETQNRISKE (231 aa). A TRAM domain is found at 417-480; sequence DTFLGKVVEV…TWSLEGSIVR (64 aa).

It belongs to the methylthiotransferase family. MiaB subfamily. In terms of assembly, monomer. Requires [4Fe-4S] cluster as cofactor.

The protein localises to the cytoplasm. It catalyses the reaction N(6)-dimethylallyladenosine(37) in tRNA + (sulfur carrier)-SH + AH2 + 2 S-adenosyl-L-methionine = 2-methylsulfanyl-N(6)-dimethylallyladenosine(37) in tRNA + (sulfur carrier)-H + 5'-deoxyadenosine + L-methionine + A + S-adenosyl-L-homocysteine + 2 H(+). Functionally, catalyzes the methylthiolation of N6-(dimethylallyl)adenosine (i(6)A), leading to the formation of 2-methylthio-N6-(dimethylallyl)adenosine (ms(2)i(6)A) at position 37 in tRNAs that read codons beginning with uridine. The chain is tRNA-2-methylthio-N(6)-dimethylallyladenosine synthase from Acetivibrio thermocellus (strain ATCC 27405 / DSM 1237 / JCM 9322 / NBRC 103400 / NCIMB 10682 / NRRL B-4536 / VPI 7372) (Clostridium thermocellum).